The following is a 337-amino-acid chain: Anthranilate phosphoribosyltransferase (337 aa).

Residues G79, 82-83 (GD), T87, 89-92 (NVST), 107-115 (KHGNRSVSS), and S119 each bind 5-phospho-alpha-D-ribose 1-diphosphate. G79 provides a ligand contact to anthranilate. S91 provides a ligand contact to Mg(2+). Anthranilate is bound at residue N110. An anthranilate-binding site is contributed by R165. Positions 223 and 224 each coordinate Mg(2+).

This sequence belongs to the anthranilate phosphoribosyltransferase family. As to quaternary structure, homodimer. The cofactor is Mg(2+).

It catalyses the reaction N-(5-phospho-beta-D-ribosyl)anthranilate + diphosphate = 5-phospho-alpha-D-ribose 1-diphosphate + anthranilate. The protein operates within amino-acid biosynthesis; L-tryptophan biosynthesis; L-tryptophan from chorismate: step 2/5. In terms of biological role, catalyzes the transfer of the phosphoribosyl group of 5-phosphorylribose-1-pyrophosphate (PRPP) to anthranilate to yield N-(5'-phosphoribosyl)-anthranilate (PRA). This chain is Anthranilate phosphoribosyltransferase, found in Aeromonas salmonicida (strain A449).